A 347-amino-acid polypeptide reads, in one-letter code: Gas vesicle ATPase GvpN1 (347 aa).

Residues M1–R11 show a composition bias toward basic residues. Residues M1 to F64 form a disordered region. Residues S18 to E55 are compositionally biased toward basic and acidic residues. G91–T98 contributes to the ATP binding site.

It belongs to the CbbQ/NirQ/NorQ/GpvN family. Forms homodimers, forms a GvpN1-GvpO1 heterodimer, interacts with GvpC1 (via the latter's C-terminus) and GvpL, might interact with GvpA1.

The protein resides in the gas vesicle. Its subcellular location is the cytoplasm. It carries out the reaction ATP + H2O = ADP + phosphate + H(+). Its function is as follows. An ATPase that functions in gas vesicle formation. A minor component of the gas vesicle, also found in soluble extracts. Probably enhances gas vesicle formation. Gas vesicles are hollow, gas filled proteinaceous nanostructures found in several microbial planktonic microorganisms. They allow positioning of halobacteria at the optimal depth for growth in the poorly aerated, shallow brine pools of their habitat. Expression of a 9.5 kb p-vac DNA fragment containing 2 divergently transcribed regions (gvpD-gvpE-gvpF-gvpG-gvpH-gvpI-gvpJ-gvpK-gvpL-gvpM and gvpA-gvpC-gvpN-gvpO) allows H.volcanii to produce gas vesicles. A similar region restores gas vesicle production in H.halobium without the p-vac locus, but which still have the c-vac locus. This chain is Gas vesicle ATPase GvpN1 (gvpN11), found in Halobacterium salinarum (strain ATCC 700922 / JCM 11081 / NRC-1) (Halobacterium halobium).